Reading from the N-terminus, the 199-residue chain is Phycocyanobilin lyase CpcT (199 aa).

It belongs to the CpcT/CpeT biliprotein lyase family.

In terms of biological role, catalyzes the site-selective attachment of phycocyanobilin (PCB) to 'Cys-154' of C-phycocyanin subunit beta (CpcB) and to 'Cys-153' of phycoerythrocyanin subunit beta (PecB). Does not have chromophore lyase activity for ApcA1, ApcA2, ApcB, ApcD, ApcF or PecA. In Nostoc sp. (strain PCC 7120 / SAG 25.82 / UTEX 2576), this protein is Phycocyanobilin lyase CpcT (cpcT1).